Reading from the N-terminus, the 37-residue chain is Large ribosomal subunit protein bL36c (37 aa).

Belongs to the bacterial ribosomal protein bL36 family.

The protein localises to the plastid. It localises to the chloroplast. This Huperzia lucidula (Shining clubmoss) protein is Large ribosomal subunit protein bL36c.